The chain runs to 62 residues: UPF0370 protein plu2724 (62 aa).

The helical transmembrane segment at 3 to 23 threads the bilayer; the sequence is WLADYWWIILILLVGVLLNAI. The segment at 36–62 is disordered; sequence DNKPELPPHRDLNSKWDDEDDWPQKKP.

This sequence belongs to the UPF0370 family.

The protein localises to the cell membrane. This chain is UPF0370 protein plu2724, found in Photorhabdus laumondii subsp. laumondii (strain DSM 15139 / CIP 105565 / TT01) (Photorhabdus luminescens subsp. laumondii).